An 873-amino-acid polypeptide reads, in one-letter code: E3 ubiquitin-protein ligase UPL5 (873 aa).

The segment covering 1 to 19 (MTLSRSSADDSTNNANRSY) has biased composition (polar residues). Disordered stretches follow at residues 1–37 (MTLS…DSSD) and 70–90 (RSGE…SNRP). The Ubiquitin-like domain maps to 95 to 171 (LQIFVRMMSG…LQLVARMQST (77 aa)). The C-type lectin domain maps to 272–296 (CLPIVLEFCKLLRKVCPDQKLYVTC). Positions 532–873 (SPEALHGGLF…DHVSSSFGKW (342 aa)) constitute an HECT domain. Cysteine 839 acts as the Glycyl thioester intermediate in catalysis.

Belongs to the UPL family. In terms of assembly, interacts with WRKY53.

Its subcellular location is the cytoplasm. The catalysed reaction is S-ubiquitinyl-[E2 ubiquitin-conjugating enzyme]-L-cysteine + [acceptor protein]-L-lysine = [E2 ubiquitin-conjugating enzyme]-L-cysteine + N(6)-ubiquitinyl-[acceptor protein]-L-lysine.. It participates in protein modification; protein ubiquitination. Functionally, E3 ubiquitin protein ligase that regulates leaf senescence through ubiquitination and subsequent degradation of WRKY53. The chain is E3 ubiquitin-protein ligase UPL5 (UPL5) from Arabidopsis thaliana (Mouse-ear cress).